We begin with the raw amino-acid sequence, 718 residues long: Interleukin-1 receptor-associated kinase 1 (718 aa).

In terms of domain architecture, Death spans 27 to 106 (MCRFYKVMDA…DIITAWHPPA (80 aa)). Threonine 66 bears the Phosphothreonine; by PKC/PRKCI mark. Residues 110–211 (PPSTTSLTPS…LHEICQGTHD (102 aa)) are proST region. A Glycyl lysine isopeptide (Lys-Gly) (interchain with G-Cter in ubiquitin) cross-link involves residue lysine 134. Residues 146-188 (AFPGSQTHSDPELCPGPSPAAHQPPLPSPAPSSTKPSPESPMS) form a disordered region. Residues 159–175 (CPGPSPAAHQPPLPSPA) are compositionally biased toward pro residues. Low complexity predominate over residues 176 to 188 (PSSTKPSPESPMS). Lysine 180 is covalently cross-linked (Glycyl lysine isopeptide (Lys-Gly) (interchain with G-Cter in ubiquitin)). Threonine 209 carries the phosphothreonine; by IRAK4 modification. The region spanning 212-521 (FSEELKIGEG…TQVYQTLEEL (310 aa)) is the Protein kinase domain. ATP-binding positions include 218–226 (IGEGGFGCV) and lysine 239. Aspartate 340 functions as the Proton acceptor in the catalytic mechanism. ATP contacts are provided by residues 342-345 (KSSN) and aspartate 358. The residue at position 375 (serine 375) is a Phosphoserine. Position 387 is a phosphothreonine (threonine 387). Residues 534–554 (AASRSPPSPQENSYVSTSGSA) are disordered. The segment covering 543–554 (QENSYVSTSGSA) has biased composition (polar residues). Serine 556 carries the phosphoserine modification. 3 disordered regions span residues 569 to 594 (GAQA…SVSD), 631 to 662 (GAAR…SSRP), and 692 to 718 (LSSS…EFRS). Positions 692 to 703 (LSSSSLPDSGQD) are enriched in low complexity. Positions 704–718 (LQDRQGPEERDEFRS) are enriched in basic and acidic residues.

It belongs to the protein kinase superfamily. TKL Ser/Thr protein kinase family. Pelle subfamily. As to quaternary structure, homodimer. Forms a complex with TRAF6, PELI1, IRAK4 and MYD88. Direct binding of SMAD6 to PELI1 prevents complex formation and hence negatively regulates IL1R-TLR signaling and eventually NF-kappa-B-mediated gene expression. The TRAF6-PELI1-IRAK1-IRAK4-MYD88 complex recruits MAP3K7/TAK1, TAB1 and TAB2 to mediate NF-kappa-B activation. Interaction with MYD88 recruits IRAK1 to the stimulated receptor complex. Interacts with TOLLIP; this interaction occurs in the cytosol prior to receptor activation. Interacts with IL1RL1. Interacts (when polyubiquitinated) with IKBKG/NEMO. Interacts with RSAD2/viperin. Interacts with IRAK1BP1. Interacts with PELI2. Interacts with ZC3H12A; this interaction increases the interaction between ZC3H12A and IKBKB/IKKB. Interacts with IRAK4. Interacts with PELI3. Interacts with PELI1 and TRAF6. Interacts with INAVA; the interaction takes place upon PRR stimulation. Interacts (via C-terminus) with NFATC4 (via N-terminus). Requires Mg(2+) as cofactor. In terms of processing, following recruitment on the activated receptor complex, phosphorylated on Thr-209, probably by IRAK4, resulting in a conformational change of the kinase domain, allowing further phosphorylations to take place. Thr-387 phosphorylation in the activation loop is required to achieve full enzymatic activity. Polyubiquitinated by TRAF6 after cell stimulation with IL-1-beta by PELI1, PELI2 and PELI3. Polyubiquitination occurs with polyubiquitin chains linked through 'Lys-63'. Ubiquitination promotes interaction with NEMO/IKBKG. Also sumoylated; leading to nuclear translocation.

It is found in the cytoplasm. The protein resides in the nucleus. The protein localises to the lipid droplet. The catalysed reaction is L-seryl-[protein] + ATP = O-phospho-L-seryl-[protein] + ADP + H(+). The enzyme catalyses L-threonyl-[protein] + ATP = O-phospho-L-threonyl-[protein] + ADP + H(+). Serine/threonine-protein kinase that plays a critical role in initiating innate immune response against foreign pathogens. Involved in Toll-like receptor (TLR) and IL-1R signaling pathways. Is rapidly recruited by MYD88 to the receptor-signaling complex upon TLR activation. Association with MYD88 leads to IRAK1 phosphorylation by IRAK4 and subsequent autophosphorylation and kinase activation. Phosphorylates E3 ubiquitin ligases Pellino proteins (PELI1, PELI2 and PELI3) to promote pellino-mediated polyubiquitination of IRAK1. Then, the ubiquitin-binding domain of IKBKG/NEMO binds to polyubiquitinated IRAK1 bringing together the IRAK1-MAP3K7/TAK1-TRAF6 complex and the NEMO-IKKA-IKKB complex. In turn, MAP3K7/TAK1 activates IKKs (CHUK/IKKA and IKBKB/IKKB) leading to NF-kappa-B nuclear translocation and activation. Alternatively, phosphorylates TIRAP to promote its ubiquitination and subsequent degradation. Phosphorylates the interferon regulatory factor 7 (IRF7) to induce its activation and translocation to the nucleus, resulting in transcriptional activation of type I IFN genes, which drive the cell in an antiviral state. When sumoylated, translocates to the nucleus and phosphorylates STAT3. In Bos taurus (Bovine), this protein is Interleukin-1 receptor-associated kinase 1 (IRAK1).